Reading from the N-terminus, the 586-residue chain is Arginine--tRNA ligase (586 aa).

The short motif at 130-140 is the 'HIGH' region element; that stretch reads ANPTGPMHVGH.

It belongs to the class-I aminoacyl-tRNA synthetase family. As to quaternary structure, monomer.

The protein resides in the cytoplasm. It catalyses the reaction tRNA(Arg) + L-arginine + ATP = L-arginyl-tRNA(Arg) + AMP + diphosphate. The polypeptide is Arginine--tRNA ligase (Methylobacterium sp. (strain 4-46)).